Consider the following 473-residue polypeptide: Xylan O-acetyltransferase 14 (473 aa).

Residues 1-17 (MTTTGSTPPRKNRSNVT) are compositionally biased toward polar residues. The interval 1–22 (MTTTGSTPPRKNRSNVTGGEGG) is disordered. At 1–54 (MTTTGSTPPRKNRSNVTGGEGGSLEEYAWRAAGEAAAAKKATRAWGVSVSLRSH) the chain is on the cytoplasmic side. A helical; Signal-anchor for type II membrane protein membrane pass occupies residues 55-75 (FSSLVLLLLLLLVALAVSATT). A disordered region spans residues 76–101 (KNGDPAETPHAPPLPPPASIKLPSSS). The Lumenal portion of the chain corresponds to 76–473 (KNGDPAETPH…NQLLYAHIVS (398 aa)). 4 cysteine pairs are disulfide-bonded: C108/C159, C130/C195, C139/C455, and C370/C451. A GDS motif motif is present at residues 182-184 (GDS). S184 functions as the Nucleophile in the catalytic mechanism. Residues N209, N223, and N414 are each glycosylated (N-linked (GlcNAc...) asparagine). D450 serves as the catalytic Proton donor. Residues 450-453 (DCIH) carry the DXXH motif motif. H453 (proton acceptor) is an active-site residue.

The protein belongs to the PC-esterase family. TBL subfamily.

It is found in the golgi apparatus membrane. Its function is as follows. Xylan acetyltransferase required for 2-O- and 3-O-monoacetylation of xylosyl residues in xylan. Catalyzes the 2-O-acetylation of xylan, followed by nonenzymatic acetyl migration to the O-3 position, resulting in products that are monoacetylated at both O-2 and O-3 positions. This chain is Xylan O-acetyltransferase 14, found in Oryza sativa subsp. japonica (Rice).